A 442-amino-acid chain; its full sequence is Chromosomal replication initiator protein DnaA (442 aa).

The interval 1-75 (MDAWPRCLER…GNGEVALAVG (75 aa)) is domain I, interacts with DnaA modulators. Positions 75-104 (GSRPRAPEPAPAPVAATIAPQAAPIAPFAG) are domain II. The tract at residues 105-322 (NLDSHYTFAN…GALNTLVARA (218 aa)) is domain III, AAA+ region. ATP contacts are provided by G150, G152, K153, and T154. The interval 323 to 442 (NFTGRSITVE…WEKLIRKLSE (120 aa)) is domain IV, binds dsDNA.

Belongs to the DnaA family. Oligomerizes as a right-handed, spiral filament on DNA at oriC.

Its subcellular location is the cytoplasm. Functionally, plays an essential role in the initiation and regulation of chromosomal replication. ATP-DnaA binds to the origin of replication (oriC) to initiate formation of the DNA replication initiation complex once per cell cycle. Binds the DnaA box (a 9 base pair repeat at the origin) and separates the double-stranded (ds)DNA. Forms a right-handed helical filament on oriC DNA; dsDNA binds to the exterior of the filament while single-stranded (ss)DNA is stabiized in the filament's interior. The ATP-DnaA-oriC complex binds and stabilizes one strand of the AT-rich DNA unwinding element (DUE), permitting loading of DNA polymerase. After initiation quickly degrades to an ADP-DnaA complex that is not apt for DNA replication. Binds acidic phospholipids. The protein is Chromosomal replication initiator protein DnaA of Xanthomonas oryzae pv. oryzae (strain PXO99A).